The sequence spans 241 residues: ATP synthase subunit a (241 aa).

5 helical membrane passes run 30-50 (GQVF…VVVG), 91-111 (FIGT…LIPW), 128-148 (INTT…AGLS), 193-213 (LVVA…VMFL), and 214-234 (GLFT…YYIG).

Belongs to the ATPase A chain family. As to quaternary structure, F-type ATPases have 2 components, CF(1) - the catalytic core - and CF(0) - the membrane proton channel. CF(1) has five subunits: alpha(3), beta(3), gamma(1), delta(1), epsilon(1). CF(0) has four main subunits: a, b, b' and c.

It localises to the cellular thylakoid membrane. Functionally, key component of the proton channel; it plays a direct role in the translocation of protons across the membrane. This Prochlorococcus marinus (strain SARG / CCMP1375 / SS120) protein is ATP synthase subunit a.